Reading from the N-terminus, the 442-residue chain is Hydroxycinnamoyltransferase 2 (442 aa).

Catalysis depends on proton acceptor residues His-159 and Asp-389.

Belongs to the plant acyltransferase family. Expressed in roots and leaves. Expressed at low levels in stems and seeds.

In terms of biological role, hydroxycinnamoyl transferase that catalyzes the transfer of an acyl from p-coumaryol-CoA to various acyl acceptors. Can use feruloyl-CoA and caffeoyl-CoA as acyl donors. This Oryza sativa subsp. japonica (Rice) protein is Hydroxycinnamoyltransferase 2.